Here is a 560-residue protein sequence, read N- to C-terminus: MSLTVEIVATKPYEGQKPGTSGLRKKVKVFTQPNYTENFVQAILEANGAALAGSTLVVGGDGRFYCKEAAELIVRLSAANGVSKLLVGQNGILSTPAVSSLIRHNKALGGIVLTASHNPGGPENDFGIKFNCENGGPAPDAFTNHIYKITTEIKEYKLVRNLQIDISKVGVTSFDIAGKPFTVEVIDSVANYVRHMEEIFDFAKLKDFVSGKATGKPLKMRIDAMNGVTGSYVREIFLNRLGATESSVVHTTPLPDFGGLHPDPNLTYAKDLVDTVAQGDYDIGAAFDGDGDRNMIIGSKAFFVTPSDSLAVIAHYLEAIPYFQKNGVQGFARSMPTASAVDLVGRKLGKEVFEVPTGWKYFGNLMDAGRLCLCGEESFGTGSNHIREKDGIWAVLAWISVMQHTGKGIEDILKQHWSVYGRNYFTRYDYEECASDPCNEMVATMEKTITAPEFVGKSYSSGGKTYKVKEADNFSYTDPVDKSVATKQGLRIVFEDGSRIVVRLSGTGSSGATVRLYIDSYEKENVLGQASVMLKPLIDIALEISQLPKFTGRNAPTVIT.

Positions 24 and 116 each coordinate alpha-D-glucose 1,6-bisphosphate. Serine 116 serves as the catalytic Phosphoserine intermediate. Mg(2+) contacts are provided by serine 116, aspartate 288, aspartate 290, and aspartate 292. Serine 116 is subject to Phosphoserine. Alpha-D-glucose 1,6-bisphosphate contacts are provided by aspartate 292, arginine 293, threonine 357, glutamate 376, serine 378, and lysine 389.

Belongs to the phosphohexose mutase family. As to quaternary structure, monomer. Mg(2+) serves as cofactor. In terms of tissue distribution, localized primarily to fat bodies in third instar larvae.

It carries out the reaction alpha-D-glucose 1-phosphate = alpha-D-glucose 6-phosphate. The enzyme catalyses O-phospho-L-seryl-[protein] + alpha-D-glucose 1-phosphate = alpha-D-glucose 1,6-bisphosphate + L-seryl-[protein]. It catalyses the reaction alpha-D-glucose 1,6-bisphosphate + L-seryl-[protein] = O-phospho-L-seryl-[protein] + alpha-D-glucose 6-phosphate. Functionally, catalyzes the reversible isomerization of alpha-D-glucose 1-phosphate to alpha-D-glucose 6-phosphate. The mechanism proceeds via the intermediate compound alpha-D-glucose 1,6-bisphosphate. This enzyme participates in both the breakdown and synthesis of glucose. Enzyme of the glycolytic pathway. Glycolysis is essential in glial cells but not in neurons; neurons rely on the citric acid cycle for their energy needs, and on lactate and alanine secreted into the hemolymph by glial cells to fuel it. The polypeptide is Phosphoglucomutase 1 (Drosophila melanogaster (Fruit fly)).